We begin with the raw amino-acid sequence, 937 residues long: MTDYKNTLNLPETGFPMRGDLAKREPDMLKNWYDKNLYQKVREASKGKKTFILHDGPPYANGTLHLGHAVNKILKDIIMKSKTALGFDTPYVPGWDCHGLPIELKVEGLVGKPNEKISAAEFRQACRDYAKEQVEGQKADFIRMGVLGDWDNPYLTMNFETEAEIIRTLGKVIQNGHLYKGSKPVHWCLDCASSLAEAEVEYEDKVSPSIYVRFAAVSAAEVEEKFNALGKGQGALSAVIWTTTPWTLPSNRAIAVNAELEYQLVQLGDERVILAAELVQAVQNALKIEQLEILGSTTGQDLELVRFHHPFYDFSVPIILGDHVTVDGGTGLVHTAPDHGQDDFVVSKKYGLEMAGLVANDGKFISSTPFFAGKGVFEANDLVLEKLKETGALLKLERIKHSYPHCWRHKTPIIFRATPQWFIGMETQDLRIKALSEIKSVRWIPSWGEARIDKMVANRPDWCISRQRTWGVPMTMFVHNETEELHPRTLELLEDIAKRVEKAGIQAWWDLDPAELLGEDAKTYHKVPDTLDVWFDSGSTYASVVEQRPEFNGKSTDMYLEGSDQHRGWFMSSLMLSTATNNKAPYKQVLTHGFTVDEKGRKMSKSLGNVIVPSEVWNKNGADILRLWVASTDYTGEIAVSHKILNSAGDTYRRIRNTARFLLANLNGFDPKNDLVNPEEMISLDRWAVSCALEAQNEIKEAYDNYQFHTVVQRLMRFCSIEMGSFYLDIIKDRQYTTKADSLARRSCQTALWHISEALVRWIAPILSFTADEIWGYLPKLDNRAEFVFTEEFYDGLFGLDESDKLDDTYWQQLLKVRAEVNRVLEQARNDKLIGAGLEAKVTVYASEEIRPLLEQLGNELRFVLITSQVVVKPLSKADVAESELTGLAIKVERADGEKCPRCWHFSTDIGSNKEHSHICGRCIENVEGNGEQRQFA.

Residues 58–68 (PYANGTLHLGH) carry the 'HIGH' region motif. An L-isoleucyl-5'-AMP-binding site is contributed by E561. The 'KMSKS' region motif lies at 602-606 (KMSKS). K605 is a binding site for ATP. Zn(2+) is bound by residues C900, C903, C920, and C923.

The protein belongs to the class-I aminoacyl-tRNA synthetase family. IleS type 1 subfamily. In terms of assembly, monomer. It depends on Zn(2+) as a cofactor.

It localises to the cytoplasm. It catalyses the reaction tRNA(Ile) + L-isoleucine + ATP = L-isoleucyl-tRNA(Ile) + AMP + diphosphate. In terms of biological role, catalyzes the attachment of isoleucine to tRNA(Ile). As IleRS can inadvertently accommodate and process structurally similar amino acids such as valine, to avoid such errors it has two additional distinct tRNA(Ile)-dependent editing activities. One activity is designated as 'pretransfer' editing and involves the hydrolysis of activated Val-AMP. The other activity is designated 'posttransfer' editing and involves deacylation of mischarged Val-tRNA(Ile). The chain is Isoleucine--tRNA ligase from Histophilus somni (strain 2336) (Haemophilus somnus).